Consider the following 232-residue polypeptide: YlmG homolog protein 1-1, chloroplastic (232 aa).

The transit peptide at 1 to 16 (MAAITALTLRSPVYLP) directs the protein to the chloroplast. Helical transmembrane passes span 147-167 (LTVV…VLMV) and 201-221 (IIPP…AVLG).

The protein belongs to the YggT family.

It localises to the plastid. The protein resides in the chloroplast thylakoid membrane. Required for the proper distribution of nucleoids in chloroplasts. The nucleoid partitioning by YLMG1-1 may be related to chloroplast division processes. This Arabidopsis thaliana (Mouse-ear cress) protein is YlmG homolog protein 1-1, chloroplastic.